We begin with the raw amino-acid sequence, 356 residues long: Magnesium-protoporphyrin IX monomethyl ester [oxidative] cyclase (356 aa).

Belongs to the AcsF family. The cofactor is Fe cation.

The catalysed reaction is Mg-protoporphyrin IX 13-monomethyl ester + 3 NADPH + 3 O2 + 2 H(+) = 3,8-divinyl protochlorophyllide a + 3 NADP(+) + 5 H2O. It participates in porphyrin-containing compound metabolism; chlorophyll biosynthesis (light-independent). Its function is as follows. Catalyzes the formation of the isocyclic ring in chlorophyll biosynthesis. Mediates the cyclase reaction, which results in the formation of divinylprotochlorophyllide (Pchlide) characteristic of all chlorophylls from magnesium-protoporphyrin IX 13-monomethyl ester (MgPMME). The sequence is that of Magnesium-protoporphyrin IX monomethyl ester [oxidative] cyclase from Synechococcus sp. (strain CC9605).